Reading from the N-terminus, the 247-residue chain is ATP synthase subunit a (247 aa).

Transmembrane regions (helical) follow at residues 26-46 (ITNNTIILFVILIGFTFLFYV), 85-105 (YFPLVLFVFSFILFANLIGLL), 115-135 (IIFTFQIAFSLFFGITLINFF), 141-161 (FFNLFVPSGVPKPLIPFLVVI), 178-198 (FANMLAGHTLLNILSAFIFNV), and 205-225 (ISFLPLLFIVFIIVLEFCIAI).

It belongs to the ATPase A chain family. In terms of assembly, F-type ATPases have 2 components, CF(1) - the catalytic core - and CF(0) - the membrane proton channel. CF(1) has five subunits: alpha(3), beta(3), gamma(1), delta(1), epsilon(1). CF(0) has three main subunits: a, b and c.

Its subcellular location is the mitochondrion inner membrane. Mitochondrial membrane ATP synthase (F(1)F(0) ATP synthase or Complex V) produces ATP from ADP in the presence of a proton gradient across the membrane which is generated by electron transport complexes of the respiratory chain. F-type ATPases consist of two structural domains, F(1) - containing the extramembraneous catalytic core and F(0) - containing the membrane proton channel, linked together by a central stalk and a peripheral stalk. During catalysis, ATP synthesis in the catalytic domain of F(1) is coupled via a rotary mechanism of the central stalk subunits to proton translocation. Key component of the proton channel; it may play a direct role in the translocation of protons across the membrane. The protein is ATP synthase subunit a (ATP6) of Acanthamoeba castellanii (Amoeba).